The chain runs to 439 residues: Lipid-A-disaccharide synthase (439 aa).

The disordered stretch occupies residues 1 to 35 (MKEIGNRESGIVDGQRNGASVGSDPTALPIPHSPL).

Belongs to the LpxB family.

The enzyme catalyses a lipid X + a UDP-2-N,3-O-bis[(3R)-3-hydroxyacyl]-alpha-D-glucosamine = a lipid A disaccharide + UDP + H(+). The protein operates within bacterial outer membrane biogenesis; LPS lipid A biosynthesis. Functionally, condensation of UDP-2,3-diacylglucosamine and 2,3-diacylglucosamine-1-phosphate to form lipid A disaccharide, a precursor of lipid A, a phosphorylated glycolipid that anchors the lipopolysaccharide to the outer membrane of the cell. The protein is Lipid-A-disaccharide synthase of Xanthomonas euvesicatoria pv. vesicatoria (strain 85-10) (Xanthomonas campestris pv. vesicatoria).